The sequence spans 504 residues: tRNA (uracil-5-)-methyltransferase homolog B (504 aa).

The N-terminal 16 residues, 1 to 16 (MAGLKRRVPLHSLRYF), are a transit peptide targeting the mitochondrion. Gln323, Glu373, and Asn423 together coordinate S-adenosyl-L-methionine. The active-site Nucleophile is the Cys451. The Proton acceptor role is filled by Glu497.

The protein belongs to the class I-like SAM-binding methyltransferase superfamily. RNA M5U methyltransferase family.

It is found in the mitochondrion. Its subcellular location is the mitochondrion matrix. It carries out the reaction uridine(54) in tRNA + S-adenosyl-L-methionine = 5-methyluridine(54) in tRNA + S-adenosyl-L-homocysteine + H(+). The catalysed reaction is a uridine in 12S rRNA + S-adenosyl-L-methionine = a 5-methyluridine in 12S rRNA + S-adenosyl-L-homocysteine + H(+). In terms of biological role, mitochondrial S-adenosyl-L-methionine-dependent methyltransferase that catalyzes the formation of 5-methyl-uridine in tRNAs and 12S rRNA. Catalyzes the methylation of uridine at position 54 (m5U54) in all tRNAs. Specifically methylates the uridine in position 429 of 12S rRNA (m5U429). Does not affect RNA stability or mitochondrial translation. In Homo sapiens (Human), this protein is tRNA (uracil-5-)-methyltransferase homolog B.